The following is a 283-amino-acid chain: Protein FdhE homolog (283 aa).

Belongs to the FdhE family.

The protein localises to the cytoplasm. Functionally, necessary for formate dehydrogenase activity. This chain is Protein FdhE homolog, found in Aquifex aeolicus (strain VF5).